The following is a 470-amino-acid chain: tRNA-2-methylthio-N(6)-dimethylallyladenosine synthase (470 aa).

The MTTase N-terminal domain occupies 20–138 (PRVHIETFGC…LPELVERARS (119 aa)). Positions 29, 65, 99, 176, 180, and 183 each coordinate [4Fe-4S] cluster. Residues 162 to 398 (REGDLKAWVT…MEVQNRIARA (237 aa)) form the Radical SAM core domain. Residues 401–464 (EARVGKVYDI…TWTLEGELVE (64 aa)) enclose the TRAM domain.

This sequence belongs to the methylthiotransferase family. MiaB subfamily. As to quaternary structure, monomer. Requires [4Fe-4S] cluster as cofactor.

Its subcellular location is the cytoplasm. The catalysed reaction is N(6)-dimethylallyladenosine(37) in tRNA + (sulfur carrier)-SH + AH2 + 2 S-adenosyl-L-methionine = 2-methylsulfanyl-N(6)-dimethylallyladenosine(37) in tRNA + (sulfur carrier)-H + 5'-deoxyadenosine + L-methionine + A + S-adenosyl-L-homocysteine + 2 H(+). In terms of biological role, catalyzes the methylthiolation of N6-(dimethylallyl)adenosine (i(6)A), leading to the formation of 2-methylthio-N6-(dimethylallyl)adenosine (ms(2)i(6)A) at position 37 in tRNAs that read codons beginning with uridine. The sequence is that of tRNA-2-methylthio-N(6)-dimethylallyladenosine synthase from Symbiobacterium thermophilum (strain DSM 24528 / JCM 14929 / IAM 14863 / T).